The chain runs to 305 residues: Nucleotide-binding protein Rxyl_2009 (305 aa).

24–31 serves as a coordination point for ATP; that stretch reads GLSGAGKS. 75-78 provides a ligand contact to GTP; the sequence is DIRG.

The protein belongs to the RapZ-like family.

In terms of biological role, displays ATPase and GTPase activities. This Rubrobacter xylanophilus (strain DSM 9941 / JCM 11954 / NBRC 16129 / PRD-1) protein is Nucleotide-binding protein Rxyl_2009.